A 704-amino-acid polypeptide reads, in one-letter code: DNA-binding protein RFX2 (704 aa).

Positions 1-39 (MQNSEGGADSPASVALRPSAAAPPVPASPQRVLVQAASS) are disordered. Low complexity predominate over residues 10–20 (SPASVALRPSA). S28 is modified (phosphoserine). Positions 199 to 274 (HLQWLLDNYE…YHYYGIRLKP (76 aa)) form a DNA-binding region, RFX-type winged-helix. The disordered stretch occupies residues 292–334 (QQPMHQKPRYRPAQKTDSLGDSSSHSGLHSTPEQTTAAQNQHH). Residues 307 to 334 (TDSLGDSSSHSGLHSTPEQTTAAQNQHH) are compositionally biased toward low complexity. S416 bears the Phosphoserine mark.

It belongs to the RFX family. As to quaternary structure, homodimer; probably only forms homodimers in testis. Heterodimer; heterodimerizes with RFX1 and RFX3.

The protein resides in the nucleus. It is found in the cytoplasm. Functionally, transcription factor that acts as a key regulator of spermatogenesis. Acts by regulating expression of genes required for the haploid phase during spermiogenesis, such as genes required for cilium assembly and function. Recognizes and binds the X-box, a regulatory motif with DNA sequence 5'-GTNRCC(0-3N)RGYAAC-3' present on promoters. Probably activates transcription of the testis-specific histone gene H1-6. The protein is DNA-binding protein RFX2 (RFX2) of Pongo abelii (Sumatran orangutan).